The sequence spans 88 residues: MGIARILSAVLFLSVLFVVTFPTLLSADHHDGRIDTCRLPSDRGRCKASFERWYFNGTTCTKFVYGGYGGNDNRFPTEKACMKRCVKA.

The N-terminal stretch at 1 to 27 (MGIARILSAVLFLSVLFVVTFPTLLSA) is a signal peptide. A propeptide spanning residues 28–33 (DHHDGR) is cleaved from the precursor. Residues 37–85 (CRLPSDRGRCKASFERWYFNGTTCTKFVYGGYGGNDNRFPTEKACMKRC) enclose the BPTI/Kunitz inhibitor domain. Disulfide bonds link C37-C85 and C60-C81.

It belongs to the venom Kunitz-type family. 01 (intermediate) subfamily. As to expression, expressed by the venom gland.

Its subcellular location is the secreted. Its function is as follows. Serine protease inhibitor that inhibits trypsin at a molar ratio of 1:1. The sequence is that of Kunitz-type U15-theraphotoxin-Hhn1p from Cyriopagopus hainanus (Chinese bird spider).